A 114-amino-acid polypeptide reads, in one-letter code: Immunoglobulin kappa variable 6D-21 (114 aa).

A signal peptide spans 1–19; sequence MSPSQLIGFLLLWVPASRG. Positions 20-42 are framework-1; the sequence is EIVLTQSPDFQSVTPKEKVTITC. The Ig-like domain occupies 20–114; the sequence is EIVLTQSPDF…YYCHQSSSLP (95 aa). A disulfide bridge links C42 with C107. The segment at 43–53 is complementarity-determining-1; sequence RASQSIGSSLH. Residues 54 to 68 form a framework-2 region; that stretch reads WYQQKPDQSPKLLIK. The interval 69 to 75 is complementarity-determining-2; sequence YASQSIS. The segment at 76-107 is framework-3; sequence GVPSRFSGSGSGTDFTLTINSLEAEDAAAYYC. The tract at residues 108–114 is complementarity-determining-3; the sequence is HQSSSLP.

In terms of assembly, immunoglobulins are composed of two identical heavy chains and two identical light chains; disulfide-linked.

It localises to the secreted. The protein resides in the cell membrane. Its function is as follows. V region of the variable domain of immunoglobulin light chains that participates in the antigen recognition. Immunoglobulins, also known as antibodies, are membrane-bound or secreted glycoproteins produced by B lymphocytes. In the recognition phase of humoral immunity, the membrane-bound immunoglobulins serve as receptors which, upon binding of a specific antigen, trigger the clonal expansion and differentiation of B lymphocytes into immunoglobulins-secreting plasma cells. Secreted immunoglobulins mediate the effector phase of humoral immunity, which results in the elimination of bound antigens. The antigen binding site is formed by the variable domain of one heavy chain, together with that of its associated light chain. Thus, each immunoglobulin has two antigen binding sites with remarkable affinity for a particular antigen. The variable domains are assembled by a process called V-(D)-J rearrangement and can then be subjected to somatic hypermutations which, after exposure to antigen and selection, allow affinity maturation for a particular antigen. This is Immunoglobulin kappa variable 6D-21 from Homo sapiens (Human).